The sequence spans 80 residues: RNA-binding protein Hfq (80 aa).

Positions 10–70 (DLFLNTVRKQ…ISTIMPGQPM (61 aa)) constitute a Sm domain.

It belongs to the Hfq family. Homohexamer.

RNA chaperone that binds small regulatory RNA (sRNAs) and mRNAs to facilitate mRNA translational regulation in response to envelope stress, environmental stress and changes in metabolite concentrations. Also binds with high specificity to tRNAs. In Rhizobium etli (strain CIAT 652), this protein is RNA-binding protein Hfq.